The chain runs to 499 residues: Aldehyde dehydrogenase 1 (499 aa).

Residues 164–166 (IPW), 164–167 (IPWN), 190–193 (KPAE), 223–224 (GS), 243–244 (GS), 243–248 (GSTKVG), and 266–268 (ELG) contribute to the NAD(+) site. Residue Glu-266 is the Proton acceptor of the active site. The Nucleophile role is filled by Cys-300. Residues 346–350 (QQYEK) and 397–399 (EIF) each bind NAD(+).

It belongs to the aldehyde dehydrogenase family. In terms of assembly, homotetramer. In terms of tissue distribution, expressed in flowers and disk florets.

It catalyses the reaction an aldehyde + NAD(+) + H2O = a carboxylate + NADH + 2 H(+). The catalysed reaction is an aldehyde + NADP(+) + H2O = a carboxylate + NADPH + 2 H(+). It carries out the reaction octanal + NADP(+) + H2O = octanoate + NADPH + 2 H(+). The enzyme catalyses (1R,3R)-chrysanthemal + NAD(+) + H2O = (1R,3R)-chrysanthemate + NADH + 2 H(+). It catalyses the reaction (1R,3R)-chrysanthemal + NADP(+) + H2O = (1R,3R)-chrysanthemate + NADPH + 2 H(+). The catalysed reaction is (E)-hept-2-enal + NADP(+) + H2O = (E)-hept-2-enoate + NADPH + 2 H(+). It carries out the reaction dodecanal + NADP(+) + H2O = dodecanoate + NADPH + 2 H(+). The enzyme catalyses citral + NADP(+) + H2O = 3,7-dimethylocta-2,6-dienoate + NADPH + 2 H(+). It catalyses the reaction perillyl aldehyde + NADP(+) + H2O = perillate + NADPH + 2 H(+). The catalysed reaction is (2E,6E)-farnesal + NADP(+) + H2O = (2E,6E)-farnesoate + NADPH + 2 H(+). It carries out the reaction (S)-(-)-citronellal + NADP(+) + H2O = (S)-(-)-citronellate + NADPH + 2 H(+). It participates in isoprenoid biosynthesis. Functionally, component of the monoterpenoid pyrethrins biosynthesis; pyrethrins are widely used plant-derived pesticide. Mediates the conversion of trans-chrysanthemal into trans-chrysanthemic acid. Can also use octanal, hept-2-enal, dodecanal, citral, farnesal, citronellal and perillyl aldehyde as substrates. The polypeptide is Aldehyde dehydrogenase 1 (Tanacetum cinerariifolium (Dalmatian daisy)).